Reading from the N-terminus, the 132-residue chain is MEPISHLVKSSLPNYLSSLPVPDSLGGWFKLSFKDWLALIPPTAVLAGLGYTAYLAFCPAAQCSAKSARCNNHIRKHEAKVVDMIDVEDIAEKAAFCRCWKTKNWPYCDGSHGEHNKLTGDNVGPVVVSKKK.

Over 1–35 (MEPISHLVKSSLPNYLSSLPVPDSLGGWFKLSFKD) the chain is Lumenal. A helical transmembrane segment spans residues 36–58 (WLALIPPTAVLAGLGYTAYLAFC). Residues 59–132 (PAAQCSAKSA…VGPVVVSKKK (74 aa)) lie on the Cytoplasmic side of the membrane. 4 residues coordinate [2Fe-2S] cluster: Cys-97, Cys-99, Cys-108, and His-112.

This sequence belongs to the CISD protein family. CISD2 subfamily. [2Fe-2S] cluster is required as a cofactor.

The protein localises to the endoplasmic reticulum membrane. The sequence is that of CDGSH iron-sulfur domain-containing protein 2 homolog from Drosophila grimshawi (Hawaiian fruit fly).